Reading from the N-terminus, the 391-residue chain is Zinc finger protein DPF3 (391 aa).

Acidic residues predominate over residues 152 to 165 (ENGDGFHDDEDFEV). 2 disordered regions span residues 152 to 200 (ENGD…PYVC) and 236 to 266 (LAEE…QKAP). Over residues 169–183 (KRKHRNKGRGRGSGR) the composition is skewed to basic residues. A C2H2-type zinc finger spans residues 198 to 235 (YVCDNRYKQKHNSKTADSVCGKRYKNRPGLSYHYAHTH). PHD-type zinc fingers lie at residues 273–333 (NDYC…CKSC) and 330–380 (CKSC…CQNL).

Component of the BAF complex. Interacts with acetylated histones H3 and H4. Component of neuron-specific chromatin remodeling complex (nBAF complex), a subfamily of ATP-dependent SWI/SNF chromatin remodeling complexes. As to expression, expressed in the heart and somites.

Its subcellular location is the nucleus. Its function is as follows. Muscle-specific component of the BAF complex, a multiprotein complex involved in transcriptional activation and repression of select genes by chromatin remodeling (alteration of DNA-nucleosome topology). Specifically binds acetylated lysines on histone 3 and 4. In the complex, it acts as a tissue-specific anchor between histone acetylations and methylations and chromatin remodeling. Belongs to the neuron-specific chromatin remodeling complex (nBAF complex) and may play a role in neural development. Plays an essential role in heart and skeletal muscle development. This Danio rerio (Zebrafish) protein is Zinc finger protein DPF3 (dpf3).